The primary structure comprises 365 residues: Phosphoserine aminotransferase (365 aa).

Arginine 42 is a binding site for L-glutamate. Residues 76 to 77 (GR), tryptophan 102, threonine 156, aspartate 175, and glutamine 198 contribute to the pyridoxal 5'-phosphate site. N6-(pyridoxal phosphate)lysine is present on lysine 199. 240–241 (NT) contacts pyridoxal 5'-phosphate.

The protein belongs to the class-V pyridoxal-phosphate-dependent aminotransferase family. SerC subfamily. Homodimer. Pyridoxal 5'-phosphate is required as a cofactor.

The protein resides in the cytoplasm. It carries out the reaction O-phospho-L-serine + 2-oxoglutarate = 3-phosphooxypyruvate + L-glutamate. It catalyses the reaction 4-(phosphooxy)-L-threonine + 2-oxoglutarate = (R)-3-hydroxy-2-oxo-4-phosphooxybutanoate + L-glutamate. It functions in the pathway amino-acid biosynthesis; L-serine biosynthesis; L-serine from 3-phospho-D-glycerate: step 2/3. Its pathway is cofactor biosynthesis; pyridoxine 5'-phosphate biosynthesis; pyridoxine 5'-phosphate from D-erythrose 4-phosphate: step 3/5. Its function is as follows. Catalyzes the reversible conversion of 3-phosphohydroxypyruvate to phosphoserine and of 3-hydroxy-2-oxo-4-phosphonooxybutanoate to phosphohydroxythreonine. This Shewanella oneidensis (strain ATCC 700550 / JCM 31522 / CIP 106686 / LMG 19005 / NCIMB 14063 / MR-1) protein is Phosphoserine aminotransferase.